The following is a 239-amino-acid chain: Increased recombination centers protein 22-1 (239 aa).

The first 19 residues, 1–19 (MKLSTIFTAFAATIATVAG), serve as a signal peptide directing secretion. Residues 20–161 (YETTGSKQTV…AAVSFFDPRL (142 aa)) lie on the Lumenal side of the membrane. A helical transmembrane segment spans residues 162–182 (IFLELVLLITFAGLIYVGYEI). The Cytoplasmic segment spans residues 183-239 (WGKQYFKGVASVKAKKVSAAKASSPVASGPSTTSATGYDTNWIPESHLKQKKTKKVN). The segment covering 201–213 (AAKASSPVASGPS) has biased composition (low complexity). The tract at residues 201-222 (AAKASSPVASGPSTTSATGYDT) is disordered.

It belongs to the IRC22 family.

Its subcellular location is the endoplasmic reticulum membrane. Its function is as follows. Is probably involved in a pathway contributing to genomic integrity. In Candida albicans (strain WO-1) (Yeast), this protein is Increased recombination centers protein 22-1 (IRC22-1).